The sequence spans 100 residues: MYAIVKTGGKQYKVAEGDLVKVEKIEGEPGSSVALSPVLLVDGASITSGDDLSSVAVNAEIVEHTKGPKIRNMHYRNKTGYKRRHGHRQPLTVVKITGIK.

It belongs to the bacterial ribosomal protein bL21 family. Part of the 50S ribosomal subunit. Contacts protein L20.

Functionally, this protein binds to 23S rRNA in the presence of protein L20. The polypeptide is Large ribosomal subunit protein bL21 (Corynebacterium kroppenstedtii (strain DSM 44385 / JCM 11950 / CIP 105744 / CCUG 35717)).